Here is a 738-residue protein sequence, read N- to C-terminus: Glycogen [starch] synthase, muscle (738 aa).

The residue at position 8 (Ser-8) is a Phosphoserine; by AMPK and PKA. Residue Ser-11 is modified to Phosphoserine. Position 39 (Lys-39) interacts with UDP. Residues His-205 and Arg-211 each contribute to the UDP-alpha-D-glucose site. Alpha-D-glucose 6-phosphate-binding residues include His-291, Glu-292, Gln-294, His-297, and Lys-301. Arg-331 contributes to the UDP binding site. Arg-331 is a UDP-alpha-D-glucose binding site. Ser-412 carries the post-translational modification Phosphoserine. His-501 contributes to the alpha-D-glucose 6-phosphate binding site. Residues Glu-510, Trp-512, and Gly-513 each contribute to the UDP-alpha-D-glucose site. Thr-515 is a UDP binding site. Alpha-D-glucose 6-phosphate-binding residues include Arg-582 and Arg-586. The segment at 632–738 (QGYRYPRPAS…PTSSLGEERN (107 aa)) is disordered. The residue at position 641 (Ser-641) is a Phosphoserine; by DYRK2, GSK3-alpha, GSK3-beta and PASK. 6 positions are modified to phosphoserine: Ser-645, Ser-649, Ser-652, Ser-653, Ser-657, and Ser-672. Residues 658 to 681 (EDEEEPRDGPLGEDSERYDEEEEA) show a composition bias toward acidic residues. The segment covering 682-695 (AKDRRNIRAPEWPR) has biased composition (basic and acidic residues). Phosphoserine is present on residues Ser-698, Ser-709, and Ser-711. A compositionally biased stretch (low complexity) spans 698 to 738 (SCSSSTGGSKRSNSVDTGPSSSLSTPTEPLSPTSSLGEERN). Phosphothreonine is present on residues Thr-722 and Thr-724. Phosphoserine is present on residues Ser-728 and Ser-732.

It belongs to the glycosyltransferase 3 family. In terms of assembly, part of the GYS1-GYG1 complex, a heterooctamer composed of a tetramer of GYS1 and 2 dimers of GYG1, where each GYS1 protomer binds to one GYG1 subunit (via GYG1 C-terminus); the GYS1 tetramer may dissociate from GYG1 dimers to continue glycogen polymerization on its own. In terms of processing, primed phosphorylation at Ser-657 (site 5) by CSNK2A1 and CSNK2A2 is required for inhibitory phosphorylation at Ser-641 (site 3a), Ser-645 (site 3b), Ser-649 (site 3c) and Ser-653 (site 4) by GSK3A an GSK3B. Phosphorylated at Ser-641 by PASK, leading to inactivation; phosphorylation by PASK is inhibited by glycogen. Phosphorylated at Ser-641 by DYRK2, leading to inactivation. Dephosphorylation at Ser-641 and Ser-645 by PP1 activates the enzyme. Phosphorylation at Ser-8 by AMPK inactivates the enzyme activity.

It carries out the reaction [(1-&gt;4)-alpha-D-glucosyl](n) + UDP-alpha-D-glucose = [(1-&gt;4)-alpha-D-glucosyl](n+1) + UDP + H(+). Its pathway is glycan biosynthesis; glycogen biosynthesis. Its activity is regulated as follows. Allosteric activation by glucose-6-phosphate. Phosphorylation reduces the activity towards UDP-glucose. When in the non-phosphorylated state, glycogen synthase does not require glucose-6-phosphate as an allosteric activator; when phosphorylated it does. Functionally, glycogen synthase participates in the glycogen biosynthetic process along with glycogenin and glycogen branching enzyme. Extends the primer composed of a few glucose units formed by glycogenin by adding new glucose units to it. In this context, glycogen synthase transfers the glycosyl residue from UDP-Glc to the non-reducing end of alpha-1,4-glucan. The sequence is that of Glycogen [starch] synthase, muscle (Gys1) from Mus musculus (Mouse).